The sequence spans 223 residues: Golgi to ER traffic protein 1 (223 aa).

A topological domain (lumenal) is located at residue methionine 1. Residues 2 to 21 form a helical membrane-spanning segment; that stretch reads SWVVAIAVVFVVVLKVLEYS. Over 22-105 the chain is Cytoplasmic; that stretch reads TSYHDLVLQS…QIKGHLKKVK (84 aa). Positions 56-105 form a coiled coil; sequence ENKSISAQDNYAKWTKNNRKLDKLDKEITELGAQLKAHNEQIKGHLKKVK. A helical membrane pass occupies residues 106–126; sequence LLLLTVPFLCFKLWKGKHIVY. At 127-177 the chain is on the lumenal side; the sequence is NLPHHQMFPQLVAGVWSQGWLYLAILPLQLAKSIVTGSSFAIETASFPHMG. Residues 178 to 194 traverse the membrane as a helical segment; it reads VSLGIWLWALNSVISNI. Residues 195 to 223 are Cytoplasmic-facing; sequence EFMTMQLWAKPVSKPSKKLEIVTDEIKVD.

It belongs to the WRB/GET1 family. In terms of assembly, component of the Golgi to ER traffic (GET) complex, which is composed of GET1, GET2 and GET3. Within the complex, GET1 and GET2 form a heterotetramer which is stabilized by phosphatidylinositol binding and which binds to the GET3 homodimer.

It is found in the endoplasmic reticulum membrane. The protein resides in the golgi apparatus membrane. Its function is as follows. Required for the post-translational delivery of tail-anchored (TA) proteins to the endoplasmic reticulum. Together with GET2, acts as a membrane receptor for soluble GET3, which recognizes and selectively binds the transmembrane domain of TA proteins in the cytosol. The GET complex cooperates with the HDEL receptor ERD2 to mediate the ATP-dependent retrieval of resident ER proteins that contain a C-terminal H-D-E-L retention signal from the Golgi to the ER. The polypeptide is Golgi to ER traffic protein 1 (Candida glabrata (strain ATCC 2001 / BCRC 20586 / JCM 3761 / NBRC 0622 / NRRL Y-65 / CBS 138) (Yeast)).